The primary structure comprises 238 residues: Uridylate kinase (238 aa).

12 to 15 (KLSG) is an ATP binding site. A UMP-binding site is contributed by G54. Residues G55 and R59 each coordinate ATP. UMP contacts are provided by residues D74 and 135 to 142 (TGNPFFTT). 3 residues coordinate ATP: T162, Y168, and D171.

The protein belongs to the UMP kinase family. Homohexamer.

The protein localises to the cytoplasm. It catalyses the reaction UMP + ATP = UDP + ADP. It functions in the pathway pyrimidine metabolism; CTP biosynthesis via de novo pathway; UDP from UMP (UMPK route): step 1/1. Inhibited by UTP. Functionally, catalyzes the reversible phosphorylation of UMP to UDP. The sequence is that of Uridylate kinase from Bordetella pertussis (strain Tohama I / ATCC BAA-589 / NCTC 13251).